Consider the following 574-residue polypeptide: Proline--tRNA ligase (574 aa).

Belongs to the class-II aminoacyl-tRNA synthetase family. ProS type 1 subfamily. Homodimer.

The protein localises to the cytoplasm. It catalyses the reaction tRNA(Pro) + L-proline + ATP = L-prolyl-tRNA(Pro) + AMP + diphosphate. Its function is as follows. Catalyzes the attachment of proline to tRNA(Pro) in a two-step reaction: proline is first activated by ATP to form Pro-AMP and then transferred to the acceptor end of tRNA(Pro). As ProRS can inadvertently accommodate and process non-cognate amino acids such as alanine and cysteine, to avoid such errors it has two additional distinct editing activities against alanine. One activity is designated as 'pretransfer' editing and involves the tRNA(Pro)-independent hydrolysis of activated Ala-AMP. The other activity is designated 'posttransfer' editing and involves deacylation of mischarged Ala-tRNA(Pro). The misacylated Cys-tRNA(Pro) is not edited by ProRS. In Ralstonia pickettii (strain 12J), this protein is Proline--tRNA ligase.